We begin with the raw amino-acid sequence, 203 residues long: NADH-ubiquinone oxidoreductase chain 6 (203 aa).

Helical transmembrane passes span 16 to 36 (SNILDILAFISIILGIYTIVS), 40 to 60 (VVSVLFLIGLFSTISIYLIMI), 70 to 90 (LLVYIGAVSILFLFILMLINI), 102 to 122 (YIPLAILSMITLVYILGQKII), and 179 to 199 (WLIIISLILLLAMVGSIVISI).

Belongs to the complex I subunit 6 family.

The protein resides in the mitochondrion membrane. It carries out the reaction a ubiquinone + NADH + 5 H(+)(in) = a ubiquinol + NAD(+) + 4 H(+)(out). Functionally, core subunit of the mitochondrial membrane respiratory chain NADH dehydrogenase (Complex I) that is believed to belong to the minimal assembly required for catalysis. Complex I functions in the transfer of electrons from NADH to the respiratory chain. The immediate electron acceptor for the enzyme is believed to be ubiquinone. This chain is NADH-ubiquinone oxidoreductase chain 6 (ND6), found in Trichophyton rubrum (Athlete's foot fungus).